Consider the following 295-residue polypeptide: Ethanolamine ammonia-lyase small subunit (295 aa).

The adenosylcob(III)alamin site is built by V207, E228, and C258.

It belongs to the EutC family. The basic unit is a heterodimer which dimerizes to form tetramers. The heterotetramers trimerize; 6 large subunits form a core ring with 6 small subunits projecting outwards. The cofactor is adenosylcob(III)alamin.

It is found in the bacterial microcompartment. It catalyses the reaction ethanolamine = acetaldehyde + NH4(+). The protein operates within amine and polyamine degradation; ethanolamine degradation. In terms of biological role, catalyzes the deamination of various vicinal amino-alcohols to oxo compounds. Allows this organism to utilize ethanolamine as the sole source of nitrogen and carbon in the presence of external vitamin B12. The sequence is that of Ethanolamine ammonia-lyase small subunit from Escherichia coli O81 (strain ED1a).